A 930-amino-acid chain; its full sequence is Isoleucine--tRNA ligase (930 aa).

The 'HIGH' region motif lies at 57-67; that stretch reads PYANGNIHVGH. Position 554 (Glu-554) interacts with L-isoleucyl-5'-AMP. The 'KMSKS' region motif lies at 595–599; it reads KMSKS. Position 598 (Lys-598) interacts with ATP. Residues Cys-888, Cys-891, Cys-908, and Cys-911 each contribute to the Zn(2+) site.

The protein belongs to the class-I aminoacyl-tRNA synthetase family. IleS type 1 subfamily. In terms of assembly, monomer. It depends on Zn(2+) as a cofactor.

It localises to the cytoplasm. The catalysed reaction is tRNA(Ile) + L-isoleucine + ATP = L-isoleucyl-tRNA(Ile) + AMP + diphosphate. Functionally, catalyzes the attachment of isoleucine to tRNA(Ile). As IleRS can inadvertently accommodate and process structurally similar amino acids such as valine, to avoid such errors it has two additional distinct tRNA(Ile)-dependent editing activities. One activity is designated as 'pretransfer' editing and involves the hydrolysis of activated Val-AMP. The other activity is designated 'posttransfer' editing and involves deacylation of mischarged Val-tRNA(Ile). This chain is Isoleucine--tRNA ligase, found in Streptococcus pneumoniae (strain Taiwan19F-14).